Consider the following 210-residue polypeptide: MIRLSEQSPLGTGRHRKCYAHPEDAQRCIKIVYHRGDGGDKEIRRELKYYAHLGRRLKDWSGIPRYHGTVETDCGTGYVYDVIADFDGKPSITLTEFAEQCRYEEDIAQLRQLLKQLKRYLQDNRIVTMSLKPQNILCHRISESEVIPVVCDNIGESTLIPLATWSKWCCLRKQERLWKRFIAQPALAIALQKDLQPRESKTLALTSREA.

This is an uncharacterized protein from Escherichia coli (strain K12).